A 713-amino-acid polypeptide reads, in one-letter code: Calpastatin (713 aa).

2 disordered regions span residues 1–187 (MNPT…LDPM) and 211–506 (DKKE…PVLP). Residues 21-30 (PNKKRHKKQA) show a composition bias toward basic residues. K32 participates in a covalent cross-link: Glycyl lysine isopeptide (Lys-Gly) (interchain with G-Cter in SUMO2). A compositionally biased stretch (basic and acidic residues) spans 46 to 63 (VVHEKKTQEVKPKEHPEP). An N6-acetyllysine modification is found at K50. The segment covering 85–94 (SRSNEQPTSE) has biased composition (polar residues). Phosphoserine is present on residues S87 and S134. At T136 the chain carries Phosphothreonine. An Inhibitory domain 1 repeat occupies 171 to 223 (TEEDNTTYTGPEVLDPMSSTYIEELGKREVTLPPKYRELLDKKEGIPVPPPDT). At S244 the chain carries Phosphoserine. Basic and acidic residues-rich tracts occupy residues 248–258 (DGKKTEKEKST), 304–332 (RKSE…KKCG), and 342–367 (YRLK…KPLS). An Inhibitory domain 2 repeat occupies 307–359 (EPELDLSSIKEIDEAKAKEEKLKKCGEDDETVPPEYRLKPAMDKDGKPLLPEA). 3 positions are modified to phosphoserine: S367, S369, and S376. Residues 370-379 (ELIDELSEDF) are compositionally biased toward acidic residues. Basic and acidic residues predominate over residues 380 to 397 (DQSKRKEKQSKPTEKTKE). S441 bears the Phosphoserine mark. Over residues 443 to 502 (GKKEADPEDGKPVEDKVKEKAKEEDREKLGEKEETIPPDYRLEEVKDKDGKTLPHKDPKE) the composition is skewed to basic and acidic residues. The Inhibitory domain 3 repeat unit spans residues 447 to 500 (ADPEDGKPVEDKVKEKAKEEDREKLGEKEETIPPDYRLEEVKDKDGKTLPHKDP). A phosphoserine mark is found at S517 and S528. Positions 536 to 713 (SAAVSEVVSQ…KQKSDGKSTS (178 aa)) are disordered. Residues 542–553 (VVSQTSAPTTHS) are compositionally biased toward polar residues. Phosphoserine occurs at positions 575 and 577. The stretch at 583–636 (PDPDENKPIEDKVKEKAEAEHRDKLGERDDTIPPEYRHLLDKDEEGKSTKPPTK) is one Inhibitory domain 4 repeat. Composition is skewed to basic and acidic residues over residues 583-646 (PDPD…KPEA) and 691-713 (KAKD…KSTS).

This sequence belongs to the protease inhibitor I27 (calpastatin) family.

Specific inhibition of calpain (calcium-dependent cysteine protease). Plays a key role in postmortem tenderization of meat and have been proposed to be involved in muscle protein degradation in living tissue. In Sus scrofa (Pig), this protein is Calpastatin (CAST).